Consider the following 95-residue polypeptide: Large ribosomal subunit protein uL23 (95 aa).

It belongs to the universal ribosomal protein uL23 family. Part of the 50S ribosomal subunit. Contacts protein L29, and trigger factor when it is bound to the ribosome.

Functionally, one of the early assembly proteins it binds 23S rRNA. One of the proteins that surrounds the polypeptide exit tunnel on the outside of the ribosome. Forms the main docking site for trigger factor binding to the ribosome. In Bacillus pumilus (strain SAFR-032), this protein is Large ribosomal subunit protein uL23.